The following is a 334-amino-acid chain: GTP 3',8-cyclase (334 aa).

Residues 11-236 (GFNRKIDYLR…ESTESSQGPA (226 aa)) enclose the Radical SAM core domain. A GTP-binding site is contributed by arginine 20. Residues cysteine 27 and cysteine 31 each coordinate [4Fe-4S] cluster. Residue tyrosine 33 participates in S-adenosyl-L-methionine binding. Residue cysteine 34 coordinates [4Fe-4S] cluster. Arginine 69 is a GTP binding site. Position 73 (glycine 73) interacts with S-adenosyl-L-methionine. A GTP-binding site is contributed by threonine 100. Residue serine 124 coordinates S-adenosyl-L-methionine. Lysine 161 contributes to the GTP binding site. Position 195 (methionine 195) interacts with S-adenosyl-L-methionine. Positions 260 and 263 each coordinate [4Fe-4S] cluster. Position 265–267 (265–267 (RVR)) interacts with GTP. A [4Fe-4S] cluster-binding site is contributed by cysteine 277.

Belongs to the radical SAM superfamily. MoaA family. As to quaternary structure, monomer and homodimer. [4Fe-4S] cluster is required as a cofactor.

It carries out the reaction GTP + AH2 + S-adenosyl-L-methionine = (8S)-3',8-cyclo-7,8-dihydroguanosine 5'-triphosphate + 5'-deoxyadenosine + L-methionine + A + H(+). It participates in cofactor biosynthesis; molybdopterin biosynthesis. Catalyzes the cyclization of GTP to (8S)-3',8-cyclo-7,8-dihydroguanosine 5'-triphosphate. The sequence is that of GTP 3',8-cyclase from Pseudomonas putida (strain W619).